A 474-amino-acid chain; its full sequence is ATP synthase subunit beta 2 (474 aa).

151–158 (GGAGVGKT) provides a ligand contact to ATP.

This sequence belongs to the ATPase alpha/beta chains family. In terms of assembly, F-type ATPases have 2 components, CF(1) - the catalytic core - and CF(0) - the membrane proton channel. CF(1) has five subunits: alpha(3), beta(3), gamma(1), delta(1), epsilon(1). CF(0) has four main subunits: a(1), b(1), b'(1) and c(9-12).

It is found in the cell inner membrane. It carries out the reaction ATP + H2O + 4 H(+)(in) = ADP + phosphate + 5 H(+)(out). Produces ATP from ADP in the presence of a proton gradient across the membrane. The catalytic sites are hosted primarily by the beta subunits. This is ATP synthase subunit beta 2 from Dinoroseobacter shibae (strain DSM 16493 / NCIMB 14021 / DFL 12).